The chain runs to 253 residues: Thiamine import ATP-binding protein ThiQ (253 aa).

The 229-residue stretch at 8 to 236 (VRLDKVSFSY…AGPEAFRRYI (229 aa)) folds into the ABC transporter domain. 38–45 (GPSGSGKS) contributes to the ATP binding site.

This sequence belongs to the ABC transporter superfamily. Thiamine importer (TC 3.A.1.19.1) family. The complex is composed of two ATP-binding proteins (ThiQ), two transmembrane proteins (ThiP) and a solute-binding protein (ThiB).

It is found in the cell inner membrane. It catalyses the reaction thiamine(out) + ATP + H2O = thiamine(in) + ADP + phosphate + H(+). Part of the ABC transporter complex ThiBPQ involved in thiamine import. Responsible for energy coupling to the transport system. The protein is Thiamine import ATP-binding protein ThiQ of Mesorhizobium japonicum (strain LMG 29417 / CECT 9101 / MAFF 303099) (Mesorhizobium loti (strain MAFF 303099)).